We begin with the raw amino-acid sequence, 242 residues long: Caffeoyl-CoA O-methyltransferase 2 (242 aa).

Lysine 16 contacts substrate. S-adenosyl-L-methionine-binding positions include threonine 58, glutamate 80, 82 to 83 (GV), serine 88, aspartate 106, and alanine 135. Aspartate 158 serves as a coordination point for substrate. Aspartate 158 is an a divalent metal cation binding site. Aspartate 160 contacts S-adenosyl-L-methionine. Residues aspartate 184 and asparagine 185 each coordinate a divalent metal cation. Asparagine 189 is a substrate binding site.

This sequence belongs to the class I-like SAM-binding methyltransferase superfamily. Cation-dependent O-methyltransferase family. CCoAMT subfamily. A divalent metal cation serves as cofactor. In terms of tissue distribution, mostly expressed in petal limbs and tubes, and, at low levels, in stems, roots and leaves.

It is found in the cytoplasm. The protein localises to the cytosol. The catalysed reaction is (E)-caffeoyl-CoA + S-adenosyl-L-methionine = (E)-feruloyl-CoA + S-adenosyl-L-homocysteine + H(+). It catalyses the reaction (E)-5-hydroxyferuloyl-CoA + S-adenosyl-L-methionine = (E)-sinapoyl-CoA + S-adenosyl-L-homocysteine + H(+). It participates in aromatic compound metabolism; phenylpropanoid biosynthesis. In terms of biological role, involved in the production of floral volatile phenylpropanoids in flowers of fragrant cultivars (e.g. cv. Mitchell and cv. V26) from cinnamic acid, a common precursor with the anthocyanin biosynthesis pathway involved in flower pigmentation. Methylates caffeoyl-CoA to feruloyl-CoA, also able to methylate 5-hydroxyferuloyl-CoA. In Petunia hybrida (Petunia), this protein is Caffeoyl-CoA O-methyltransferase 2.